Consider the following 123-residue polypeptide: MEVKNIGIPHVLPPASVCDDPLCPWHGHLKVRLKLLEVTVEKVRMHKAAVVIHEWLHYIRKYNRYERRRKRMRVRVPECIEVKPGDKVIIAETRPLSKTIAWVVIGKKEDVVEWKAKHETLQA.

It belongs to the universal ribosomal protein uS17 family. Part of the 30S ribosomal subunit.

Functionally, one of the primary rRNA binding proteins, it binds specifically to the 5'-end of 16S ribosomal RNA. This is Small ribosomal subunit protein uS17 from Pyrobaculum aerophilum (strain ATCC 51768 / DSM 7523 / JCM 9630 / CIP 104966 / NBRC 100827 / IM2).